Consider the following 173-residue polypeptide: MAGVGRTMIAPLLVLNLIMYLIVIGFASWNLNHYINGETNHPGVAGNGATFYFLVFAILAGVVGAASKLAGVHHVRSWGAHSLAAGAASALIAWAITALAFGLACKEIHIGGYRGWRLRVLEAFVIILAFTQLLYVAMLHGGLFSGNHAAGAGGYGGDYPADHHHKPAAAARV.

4 helical membrane-spanning segments follow: residues 9 to 29 (IAPL…FASW), 43 to 63 (GVAG…AGVV), 83 to 103 (LAAG…AFGL), and 124 to 144 (FVII…GGLF).

As to expression, expressed in roots, leaf blades, leaf sheaths, stems, spikelets and embryos.

It is found in the membrane. Functionally, may be involved in abiotic stress response through abscisic acid-dependent signaling. This Oryza sativa subsp. japonica (Rice) protein is Membrane protein PM19L.